The chain runs to 466 residues: Soluble pyridine nucleotide transhydrogenase (466 aa).

36–45 provides a ligand contact to FAD; it reads ERYHQVGGGC.

It belongs to the class-I pyridine nucleotide-disulfide oxidoreductase family. It depends on FAD as a cofactor.

The protein localises to the cytoplasm. It catalyses the reaction NAD(+) + NADPH = NADH + NADP(+). Its function is as follows. Conversion of NADPH, generated by peripheral catabolic pathways, to NADH, which can enter the respiratory chain for energy generation. This is Soluble pyridine nucleotide transhydrogenase from Colwellia psychrerythraea (strain 34H / ATCC BAA-681) (Vibrio psychroerythus).